Reading from the N-terminus, the 298-residue chain is Aspartate carbamoyltransferase catalytic subunit (298 aa).

Residues Arg-54 and Thr-55 each contribute to the carbamoyl phosphate site. Position 82 (Lys-82) interacts with L-aspartate. Residues Arg-104, His-132, and Gln-135 each coordinate carbamoyl phosphate. Arg-165 and Arg-218 together coordinate L-aspartate. Carbamoyl phosphate-binding residues include Gly-260 and Pro-261.

Belongs to the aspartate/ornithine carbamoyltransferase superfamily. ATCase family. In terms of assembly, heterododecamer (2C3:3R2) of six catalytic PyrB chains organized as two trimers (C3), and six regulatory PyrI chains organized as three dimers (R2).

It catalyses the reaction carbamoyl phosphate + L-aspartate = N-carbamoyl-L-aspartate + phosphate + H(+). It functions in the pathway pyrimidine metabolism; UMP biosynthesis via de novo pathway; (S)-dihydroorotate from bicarbonate: step 2/3. Catalyzes the condensation of carbamoyl phosphate and aspartate to form carbamoyl aspartate and inorganic phosphate, the committed step in the de novo pyrimidine nucleotide biosynthesis pathway. This Wolbachia sp. subsp. Brugia malayi (strain TRS) protein is Aspartate carbamoyltransferase catalytic subunit.